A 381-amino-acid chain; its full sequence is Cytochrome b (381 aa).

The next 4 helical transmembrane spans lie at Phe-34–Met-54, Trp-78–Ile-99, Trp-114–Leu-134, and Phe-179–Leu-199. Heme b contacts are provided by His-84 and His-98. Positions 183 and 197 each coordinate heme b. His-202 lines the a ubiquinone pocket. The next 4 membrane-spanning stretches (helical) occupy residues Tyr-227–Leu-247, Leu-289–His-309, Leu-321–Gly-341, and Phe-348–Pro-368.

This sequence belongs to the cytochrome b family. As to quaternary structure, the cytochrome bc1 complex contains 3 respiratory subunits (MT-CYB, CYC1 and UQCRFS1), 2 core proteins (UQCRC1 and UQCRC2) and probably 6 low-molecular weight proteins. The cofactor is heme b.

It localises to the mitochondrion inner membrane. Its function is as follows. Component of the ubiquinol-cytochrome c reductase complex (complex III or cytochrome b-c1 complex) that is part of the mitochondrial respiratory chain. The b-c1 complex mediates electron transfer from ubiquinol to cytochrome c. Contributes to the generation of a proton gradient across the mitochondrial membrane that is then used for ATP synthesis. In Isurus oxyrinchus (Shortfin mako shark), this protein is Cytochrome b (mt-cyb).